A 315-amino-acid polypeptide reads, in one-letter code: Heme oxygenase 2 (315 aa).

Over residues 1 to 12 the composition is skewed to acidic residues; the sequence is MSSEVETSEGVD. Residues 1 to 28 are disordered; sequence MSSEVETSEGVDESEKNSMAPEKENHTK. Residue Ser2 is modified to N-acetylserine. The residue at position 2 (Ser2) is a Phosphoserine. Residues 2–294 are Cytoplasmic-facing; sequence SSEVETSEGV…TTVAVLRKPS (293 aa). Residues 13–28 are compositionally biased toward basic and acidic residues; it reads ESEKNSMAPEKENHTK. Residues His44, Tyr153, Lys198, and Arg202 each coordinate heme b. 2 HRM repeats span residues 263-268 and 280-285; these read KCPFYA and NCPFQT. Residues Cys264 and Cys281 each carry the S-nitrosocysteine modification. Residues 295-315 traverse the membrane as a helical; Anchor for type IV membrane protein segment; that stretch reads LQLILAASVALVAGLLAWYYM.

This sequence belongs to the heme oxygenase family. In terms of processing, a soluble form arises by proteolytic removal of the membrane anchor. S-nitrosylated by BLVRB. In terms of tissue distribution, ubiquitous.

It localises to the microsome membrane. The protein localises to the endoplasmic reticulum membrane. The enzyme catalyses heme b + 3 reduced [NADPH--hemoprotein reductase] + 3 O2 = biliverdin IXalpha + CO + Fe(2+) + 3 oxidized [NADPH--hemoprotein reductase] + 3 H2O + H(+). Catalyzes the oxidative cleavage of heme at the alpha-methene bridge carbon, released as carbon monoxide (CO), to generate biliverdin IXalpha, while releasing the central heme iron chelate as ferrous iron. The protein is Heme oxygenase 2 (Hmox2) of Mus musculus (Mouse).